Here is a 448-residue protein sequence, read N- to C-terminus: Elongation factor 1-alpha (448 aa).

The region spanning 5-230 (KIHISIVVIG…DQINEPKRPS (226 aa)) is the tr-type G domain. Residues 14-21 (GHVDSGKS) form a G1 region. GTP is bound at residue 14 to 21 (GHVDSGKS). Lysine 55 carries the N6,N6-dimethyllysine modification. The G2 stretch occupies residues 70-74 (GITID). N6,N6,N6-trimethyllysine is present on lysine 79. The interval 91–94 (DAPG) is G3. Residues 91-95 (DAPGH) and 153-156 (NKMD) contribute to the GTP site. The tract at residues 153 to 156 (NKMD) is G4. Lysine 187 carries the N6,N6,N6-trimethyllysine modification. A G5 region spans residues 194-196 (SGF). Lysine 261 bears the N6-methyllysine mark. Glutamate 289 is subject to 5-glutamyl glycerylphosphorylethanolamine. An N6,N6,N6-trimethyllysine modification is found at lysine 306. Glutamate 362 is modified (5-glutamyl glycerylphosphorylethanolamine). Lysine 396 is subject to N6,N6,N6-trimethyllysine.

The protein belongs to the TRAFAC class translation factor GTPase superfamily. Classic translation factor GTPase family. EF-Tu/EF-1A subfamily.

It localises to the cytoplasm. Its function is as follows. This protein promotes the GTP-dependent binding of aminoacyl-tRNA to the A-site of ribosomes during protein biosynthesis. In Solanum lycopersicum (Tomato), this protein is Elongation factor 1-alpha.